Consider the following 338-residue polypeptide: RNA 3'-terminal phosphate cyclase (338 aa).

Residues Gln-103 and 283–287 (YLADQ) each bind ATP. The Tele-AMP-histidine intermediate role is filled by His-308.

It belongs to the RNA 3'-terminal cyclase family. Type 1 subfamily.

It is found in the cytoplasm. The enzyme catalyses a 3'-end 3'-phospho-ribonucleotide-RNA + ATP = a 3'-end 2',3'-cyclophospho-ribonucleotide-RNA + AMP + diphosphate. Catalyzes the conversion of 3'-phosphate to a 2',3'-cyclic phosphodiester at the end of RNA. The mechanism of action of the enzyme occurs in 3 steps: (A) adenylation of the enzyme by ATP; (B) transfer of adenylate to an RNA-N3'P to produce RNA-N3'PP5'A; (C) and attack of the adjacent 2'-hydroxyl on the 3'-phosphorus in the diester linkage to produce the cyclic end product. The biological role of this enzyme is unknown but it is likely to function in some aspects of cellular RNA processing. This is RNA 3'-terminal phosphate cyclase from Escherichia coli O8 (strain IAI1).